Consider the following 223-residue polypeptide: Deoxyribose-phosphate aldolase (223 aa).

The active-site Proton donor/acceptor is Asp-89. Lys-152 acts as the Schiff-base intermediate with acetaldehyde in catalysis. Lys-181 acts as the Proton donor/acceptor in catalysis.

The protein belongs to the DeoC/FbaB aldolase family. DeoC type 1 subfamily.

It is found in the cytoplasm. The catalysed reaction is 2-deoxy-D-ribose 5-phosphate = D-glyceraldehyde 3-phosphate + acetaldehyde. It participates in carbohydrate degradation; 2-deoxy-D-ribose 1-phosphate degradation; D-glyceraldehyde 3-phosphate and acetaldehyde from 2-deoxy-alpha-D-ribose 1-phosphate: step 2/2. Its function is as follows. Catalyzes a reversible aldol reaction between acetaldehyde and D-glyceraldehyde 3-phosphate to generate 2-deoxy-D-ribose 5-phosphate. This is Deoxyribose-phosphate aldolase from Bacillus cereus (strain G9842).